The chain runs to 57 residues: Large ribosomal subunit protein bL32 (57 aa).

The protein belongs to the bacterial ribosomal protein bL32 family.

This chain is Large ribosomal subunit protein bL32, found in Corynebacterium glutamicum (strain R).